Consider the following 339-residue polypeptide: MFYKLAQKVMFQMDPELAHNIAIGSLKMTGNNLLNCFYRQQVKSSPVTCMGLTFPNPVGLAAGLDKDGESIDAFHAMGFGHVEVGTVTPRPQAGNDQPRLFRLKPAKGIINRMGFNNKGVDNLVRNLMAKKSDIMVGVNIGKNKDTPVEQGKDDYLICMEKVYQYASYIAVNISSPNTPGLRSMQYGELLDDLLSSIKAKQTELAAKHGKYVPVALKIAPDLTSEEISAIADSLMSNQFDGVIATNTTLSRDTVTDLKHAEEMGGLSGKPLADLSTQVIKQLAICLQGKIPIIGVGGINSAADALAKFDAGSTMVQIYSGFIYQGPKLVDQIARAYCAK.

FMN is bound by residues 62 to 66 (AGLDK) and threonine 86. Position 66 (lysine 66) interacts with substrate. Residue 111-115 (NRMGF) participates in substrate binding. FMN contacts are provided by asparagine 139 and asparagine 172. Asparagine 172 contacts substrate. Residue serine 175 is the Nucleophile of the active site. Asparagine 177 serves as a coordination point for substrate. 2 residues coordinate FMN: lysine 217 and threonine 245. A substrate-binding site is contributed by 246–247 (NT). FMN-binding positions include glycine 268, glycine 297, and 318-319 (YS).

It belongs to the dihydroorotate dehydrogenase family. Type 2 subfamily. In terms of assembly, monomer. FMN serves as cofactor.

It is found in the cell membrane. It catalyses the reaction (S)-dihydroorotate + a quinone = orotate + a quinol. It participates in pyrimidine metabolism; UMP biosynthesis via de novo pathway; orotate from (S)-dihydroorotate (quinone route): step 1/1. In terms of biological role, catalyzes the conversion of dihydroorotate to orotate with quinone as electron acceptor. The sequence is that of Dihydroorotate dehydrogenase (quinone) from Shewanella frigidimarina (strain NCIMB 400).